Reading from the N-terminus, the 474-residue chain is Light-independent protochlorophyllide reductase subunit N (474 aa).

Residues Cys-22, Cys-47, and Cys-107 each coordinate [4Fe-4S] cluster.

This sequence belongs to the BchN/ChlN family. Protochlorophyllide reductase is composed of three subunits; ChlL, ChlN and ChlB. Forms a heterotetramer of two ChlB and two ChlN subunits. The cofactor is [4Fe-4S] cluster.

The protein resides in the plastid. The protein localises to the chloroplast. The catalysed reaction is chlorophyllide a + oxidized 2[4Fe-4S]-[ferredoxin] + 2 ADP + 2 phosphate = protochlorophyllide a + reduced 2[4Fe-4S]-[ferredoxin] + 2 ATP + 2 H2O. It functions in the pathway porphyrin-containing compound metabolism; chlorophyll biosynthesis (light-independent). Functionally, component of the dark-operative protochlorophyllide reductase (DPOR) that uses Mg-ATP and reduced ferredoxin to reduce ring D of protochlorophyllide (Pchlide) to form chlorophyllide a (Chlide). This reaction is light-independent. The NB-protein (ChlN-ChlB) is the catalytic component of the complex. The chain is Light-independent protochlorophyllide reductase subunit N from Physcomitrium patens (Spreading-leaved earth moss).